Consider the following 375-residue polypeptide: Growth/differentiation factor 8 (375 aa).

A signal peptide spans 1 to 23; the sequence is MQKLAVYVYIYLFMQIAVDPVAL. The propeptide occupies 24–266; the sequence is DGSSQPTENA…VTDTPKRSRR (243 aa). Asn71 carries an N-linked (GlcNAc...) asparagine glycan. 4 disulfides stabilise this stretch: Cys272–Cys282, Cys281–Cys340, Cys309–Cys372, and Cys313–Cys374.

The protein belongs to the TGF-beta family. Homodimer; disulfide-linked.

It localises to the secreted. Its function is as follows. Acts specifically as a negative regulator of skeletal muscle growth. The sequence is that of Growth/differentiation factor 8 (MSTN) from Gallus gallus (Chicken).